The following is a 345-amino-acid chain: Guanine nucleotide-binding protein G(i) subunit alpha-3 (345 aa).

The region spanning 23–345 (KEVKLLLLGA…KSNLMECGLY (323 aa)) is the G-alpha domain. The segment at 26-39 (KLLLLGAGESGKST) is G1 motif. Residues Gly33, Glu34, Ser35, Gly36, Lys37, Ser38, Thr39, Asp141, Ser142, Leu166, Arg167, Thr168, Arg169, Val170, Lys171, Thr172, Val192, Gly194, Asn260, Lys261, Asp263, Leu264, Cys316, Ala317, and Thr318 each coordinate GTP. Ser38 is a binding site for Mg(2+). Positions 164-172 (DVLRTRVKT) are G2 motif. Thr172 provides a ligand contact to Mg(2+). The G3 motif stretch occupies residues 187 to 196 (FKMFDVGGQR). The segment at 256-263 (ILFLNKKD) is G4 motif. Residues 315–320 (TCATDT) form a G5 motif region.

This sequence belongs to the G-alpha family. G(i/o/t/z) subfamily. In terms of assembly, heterotrimeric G proteins are composed of 3 units; alpha, beta and gamma. The alpha subunit contains the guanine nucleotide binding site. GTP binding causes dissociation of the heterotrimer, liberating the individual subunits so that they can interact with downstream effector proteins.

Its subcellular location is the cytoplasm. The protein localises to the cell membrane. It localises to the cytoskeleton. It is found in the microtubule organizing center. The protein resides in the centrosome. Its subcellular location is the membrane. In terms of biological role, heterotrimeric guanine nucleotide-binding proteins (G proteins) function as transducers downstream of G protein-coupled receptors (GPCRs) in numerous signaling cascades. The alpha chain contains the guanine nucleotide binding site and alternates between an active, GTP-bound state and an inactive, GDP-bound state. Signaling by an activated GPCR promotes GDP release and GTP binding. The alpha subunit has a low GTPase activity that converts bound GTP to GDP, thereby terminating the signal. Both GDP release and GTP hydrolysis are modulated by numerous regulatory proteins. Signaling is mediated via effector proteins, such as adenylate cyclase. Inhibits adenylate cyclase activity, leading to decreased intracellular cAMP levels. Stimulates the activity of receptor-regulated K(+) channels. The active GTP-bound form prevents the association of RGS14 with centrosomes and is required for the translocation of RGS14 from the cytoplasm to the plasma membrane. May play a role in cell division. The active GTP-bound form activates the calcium permeant TRPC5 ion channels. This Xenopus laevis (African clawed frog) protein is Guanine nucleotide-binding protein G(i) subunit alpha-3 (gnai3).